Here is a 375-residue protein sequence, read N- to C-terminus: Actin-binding Rho-activating protein (375 aa).

Residues 37-101 (ANENSTRQAQ…ATEVSHIKRK (65 aa)) are disordered. Residues 80-101 (PDGDREGRGSEEATEVSHIKRK) show a composition bias toward basic and acidic residues. A phosphoserine mark is found at Ser-150 and Ser-182. Residues 175–197 (EPKWKSDSIDTEDSGYGGDMEER) form a disordered region. 2 actin-binding regions span residues 193 to 293 (DMEE…AERA) and 294 to 375 (KRAE…TLLE). Interaction with actin regions lie at residues 234–279 (SQVD…GDEG) and 346–375 (MRAR…TLLE).

Binds F-actin and ABLIM1, ABLIM2 and ABLIM3. Interaction with ABLIM2 and ABLIM3 enhances activity. In terms of tissue distribution, predominantly expressed in heart and skeletal muscle, and expressed at lower levels in adrenal gland, brain, kidney, liver, and testis.

The protein resides in the cytoplasm. It localises to the myofibril. Its subcellular location is the sarcomere. It is found in the cytoskeleton. Acts as an activator of serum response factor (SRF)-dependent transcription possibly by inducing nuclear translocation of MKL1 or MKL2 and through a mechanism requiring Rho-actin signaling. This is Actin-binding Rho-activating protein from Rattus norvegicus (Rat).